The chain runs to 312 residues: 2-phospho-L-lactate transferase (312 aa).

Residues D50 and K89 each contribute to the 7,8-didemethyl-8-hydroxy-5-deazariboflavin site.

This sequence belongs to the CofD family. As to quaternary structure, homodimer. Requires Mg(2+) as cofactor.

The catalysed reaction is (2S)-lactyl-2-diphospho-5'-guanosine + 7,8-didemethyl-8-hydroxy-5-deazariboflavin = oxidized coenzyme F420-0 + GMP + H(+). Its pathway is cofactor biosynthesis; coenzyme F420 biosynthesis. Its function is as follows. Catalyzes the transfer of the 2-phospholactate moiety from (2S)-lactyl-2-diphospho-5'-guanosine to 7,8-didemethyl-8-hydroxy-5-deazariboflavin (FO) with the formation of oxidized coenzyme F420-0 and GMP. The sequence is that of 2-phospho-L-lactate transferase from Methanococcus vannielii (strain ATCC 35089 / DSM 1224 / JCM 13029 / OCM 148 / SB).